A 402-amino-acid chain; its full sequence is Nodal homolog 4-A (402 aa).

The first 18 residues, 1–18, serve as a signal peptide directing secretion; that stretch reads MHLYFYCLILLFVPGGNS. A propeptide spanning residues 19 to 278 is cleaved from the precursor; sequence LGINSYLKHM…TIAHTRRHRR (260 aa). N-linked (GlcNAc...) asparagine glycans are attached at residues Asn-37, Asn-238, and Asn-340. 3 disulfide bridges follow: Cys-302/Cys-368, Cys-331/Cys-399, and Cys-335/Cys-401.

It belongs to the TGF-beta family. As to quaternary structure, homodimer; disulfide-linked. During blastula stages, expressed in the endoderm at a higher level dorsally than ventrally. Expressed in the deep cells of the Spemann organizer at the gastrula stage. Expressed in the notochord (a derivative of the organizer) and neural tube during the neural stages.

Its subcellular location is the secreted. Cooperation and regulatory loops of multiple nodals are essential for mesendoderm patterning in early embryos. Plays a role in mesoderm formation and may be required for neural development. The polypeptide is Nodal homolog 4-A (nodal4-a) (Xenopus laevis (African clawed frog)).